Consider the following 112-residue polypeptide: Large ribosomal subunit protein eL30 (112 aa).

It belongs to the eukaryotic ribosomal protein eL30 family.

The polypeptide is Large ribosomal subunit protein eL30 (rpl30) (Dictyostelium discoideum (Social amoeba)).